The sequence spans 516 residues: GPI mannosyltransferase 4 (516 aa).

The Lumenal portion of the chain corresponds to 1–5; the sequence is MMRYQ. Residues 6–26 traverse the membrane as a helical segment; the sequence is WWLYLVYAIGLMLCLGPSYIH. Over 27–60 the chain is Cytoplasmic; sequence PDEHFQCIEILAMQFMKVKGTIPWEFKSKFAARS. Residues 61-81 traverse the membrane as a helical segment; the sequence is YGPLLLVYGPLFTILESFPEI. Over 82-175 the chain is Lumenal; sequence QDNPALILYS…IQRSNFKNSV (94 aa). Residues 176–196 traverse the membrane as a helical segment; it reads ILGLIFSFGVFNRVTFPAFIF. The Cytoplasmic portion of the chain corresponds to 197 to 210; sequence LPCLILFWKFYRVH. Residues 211–231 form a helical membrane-spanning segment; the sequence is WKSFSLLLLSFSFSSCLFVLI. At 232-270 the chain is on the lumenal side; it reads DTNIYNNGKGFVITPLNNLKYNLNVQNLQVHGLHPRYTH. A helical membrane pass occupies residues 271 to 291; it reads LLVNLPQIVGPVLLLAIFSGY. At 292 to 295 the chain is on the cytoplasmic side; sequence KLDK. The helical transmembrane segment at 296-316 threads the bilayer; sequence LSTYAIISGLLFLSFFQHQEL. Residue arginine 317 is a topological domain, lumenal. Residues 318-338 form a helical membrane-spanning segment; that stretch reads FLVPLVPLLVTNLNWTPLSST. Residues 339-348 lie on the Cytoplasmic side of the membrane; sequence LVNKKIFKGT. Residues 349–369 traverse the membrane as a helical segment; it reads WLLFNIIMAFIMGISHQAGII. Residues 370 to 516 are Lumenal-facing; the sequence is QFLGDYFHFR…GLTVYSIELL (147 aa). N-linked (GlcNAc...) asparagine glycosylation is found at asparagine 403 and asparagine 452.

Belongs to the glycosyltransferase 22 family. PIGZ subfamily.

The protein resides in the endoplasmic reticulum membrane. It functions in the pathway glycolipid biosynthesis; glycosylphosphatidylinositol-anchor biosynthesis. Alpha-1,2-mannosyltransferase involved in glycosylphosphatidylinositol-anchor biosynthesis. Transfers a fourth mannose to trimannosyl-GPIs during GPI precursor assembly. The presence of a fourth mannose in GPI is essential in fungi. Involved in plasmid maintenance with SMP2. The polypeptide is GPI mannosyltransferase 4 (SMP3) (Saccharomyces cerevisiae (strain ATCC 204508 / S288c) (Baker's yeast)).